A 421-amino-acid chain; its full sequence is ATP-dependent RNA helicase RhlB (421 aa).

The short motif at 9 to 37 (QKFSDFALHPQVVEALEKKRFYNCTPIQA) is the Q motif element. The Helicase ATP-binding domain occupies 40–219 (LPLTLAGRDV…FEQMNNAEYV (180 aa)). 53-60 (AQTGTGKT) provides a ligand contact to ATP. A DEAD box motif is present at residues 165–168 (DEAD). The region spanning 245-390 (RLLQTLIEEE…VSKYNPEALM (146 aa)) is the Helicase C-terminal domain. The interval 396–421 (PLRLTRSRPGNGPRRAGAPRNRRRSG) is disordered. Low complexity predominate over residues 402–414 (SRPGNGPRRAGAP).

This sequence belongs to the DEAD box helicase family. RhlB subfamily. In terms of assembly, component of the RNA degradosome, which is a multiprotein complex involved in RNA processing and mRNA degradation.

The protein localises to the cytoplasm. The enzyme catalyses ATP + H2O = ADP + phosphate + H(+). Functionally, DEAD-box RNA helicase involved in RNA degradation. Has RNA-dependent ATPase activity and unwinds double-stranded RNA. This Salmonella dublin (strain CT_02021853) protein is ATP-dependent RNA helicase RhlB.